Reading from the N-terminus, the 298-residue chain is tRNA pseudouridine synthase B (298 aa).

D39 serves as the catalytic Nucleophile.

It belongs to the pseudouridine synthase TruB family. Type 1 subfamily.

It carries out the reaction uridine(55) in tRNA = pseudouridine(55) in tRNA. Its function is as follows. Responsible for synthesis of pseudouridine from uracil-55 in the psi GC loop of transfer RNAs. This is tRNA pseudouridine synthase B from Lactobacillus delbrueckii subsp. bulgaricus (strain ATCC BAA-365 / Lb-18).